The primary structure comprises 1130 residues: Transmembrane channel-like protein 3 (1130 aa).

Residues 1 to 148 (MKTSKASQRY…ASYFIFLRWL (148 aa)) are Cytoplasmic-facing. Residues 149-169 (FGINIVLTVMTGAFVVLPELI) traverse the membrane as a helical segment. At 170-192 (AGQPFGSTASKTIPREQITSAQD) the chain is on the extracellular side. The helical transmembrane segment at 193-213 (LDTVWSLGGYLQYSVLFYGYY) threads the bilayer. Residues 214 to 225 (GRERRIGRAGYR) are Cytoplasmic-facing. The chain crosses the membrane as a helical span at residues 226–246 (LPLAYFLVGMAVFAYSFIVLL). Topologically, residues 247–319 (KRMAKNSRTS…KNMAVTVCLR (73 aa)) are extracellular. N-linked (GlcNAc...) asparagine glycosylation is present at asparagine 264. A helical membrane pass occupies residues 320–340 (IIANILVLLSLAGSIYLIYFV). Residues 341–361 (VDRSQKLEQSKKELTLWEKNE) lie on the Cytoplasmic side of the membrane. The helical transmembrane segment at 362-382 (VSVVVSLVTMLAPSAFDLIAA) threads the bilayer. Residues 383–393 (LEMYHPRTTLR) lie on the Extracellular side of the membrane. A helical membrane pass occupies residues 394–414 (FQLARVLVLYLGNLYSLIIAL). The Cytoplasmic portion of the chain corresponds to 415 to 509 (LDKVNSMNIE…CWETYVGQEM (95 aa)). The helical transmembrane segment at 510–530 (LKLSVIDMLFTVASILLIDFF) threads the bilayer. At 531–570 (RGLFVRYLSDYWCWDLESKFPEYGEFKIAENVLHLVYNQG) the chain is on the extracellular side. The chain crosses the membrane as a helical span at residues 571 to 591 (MIWMGAFFSPCLPAFNVLKLI). Over 592 to 619 (GLMYLRSWAVLTCNVPHQQVFRASRSNN) the chain is Cytoplasmic. Residues 620-640 (FYLAMLLFMLFLCMLPTIFAI) form a helical membrane-spanning segment. Residues 641–680 (VHYKPSLNCGPFSGQEKIYDIVSETIENDFPTWFHAVVGH) are Extracellular-facing. Residues 681–701 (ISSPVVILPAVLLLFMLIYYL) traverse the membrane as a helical segment. At 702-1130 (QSIARSLKLS…DLNDLICSNV (429 aa)) the chain is on the cytoplasmic side. 5 disordered regions span residues 742–774 (DARQAGSATEAESSENSKPKTLQARIQTHEESS), 819–893 (RSLP…FQPI), 999–1019 (SSCFYTGDRSENNTRDPKYQR), 1033–1059 (QLERPTFVHRKPRSRNGQYPQHALKAR), and 1097–1116 (QGRFPRSASQLGRRKAKSRQ). A compositionally biased stretch (polar residues) spans 747–767 (GSATEAESSENSKPKTLQARI). Residues 840–850 (SRSRPEQDTNR) show a composition bias toward basic and acidic residues. Positions 856 to 876 (CSSTSNLHKNRSCSSVTQTQP) are enriched in polar residues. 2 stretches are compositionally biased toward basic and acidic residues: residues 878–890 (KDVRSEPLSRKDF) and 1006–1017 (DRSENNTRDPKY). Residues 1097–1106 (QGRFPRSASQ) are compositionally biased toward polar residues.

Belongs to the TMC family. As to expression, detected in most neuronal organs and also in some non-neuronal tissues.

The protein localises to the membrane. Its function is as follows. Probable component of an ion channel. Molecular function hasn't been characterized yet. This Mus musculus (Mouse) protein is Transmembrane channel-like protein 3.